Consider the following 356-residue polypeptide: Protein HEXIM1 (356 aa).

2 stretches are compositionally biased toward basic and acidic residues: residues 1 to 11 and 24 to 47; these read MAEPLLSEHQH and VHEEQNSERPPSAEERVPKEDSRW. Residues 1-160 are disordered; the sequence is MAEPLLSEHQ…RRRPSKKKRH (160 aa). Residues 48–58 are compositionally biased toward polar residues; that stretch reads QSRASLQSGSR. The segment covering 84 to 93 has biased composition (basic and acidic residues); the sequence is CLEKGEKGQN. Phosphoserine occurs at positions 98 and 103. Residues 145–160 are compositionally biased toward basic residues; sequence LGKKKHRRRPSKKKRH. A basic region; mediates nuclear localization and interaction with 7SK snRNA and NR3C1 region spans residues 147 to 174; the sequence is KKKHRRRPSKKKRHWKPYYKLTWEEKKK. An interaction with P-TEFb region spans residues 199-202; sequence PYNT. An autoinhibitory acidic region; in absence of 7SK snRNA interacts with the basic region preventing interaction with P-TEFb and modulating subcellular localization region spans residues 207–247; sequence MDDHDQEEPDLKTGLYPKRAAAKSDDTSDEDFVEEAGEEDG. The interval 209-259 is disordered; the sequence is DHDQEEPDLKTGLYPKRAAAKSDDTSDEDFVEEAGEEDGGSDGMGGDGSEF. Ser230 is subject to Phosphoserine. Thr233 bears the Phosphothreonine mark. A compositionally biased stretch (acidic residues) spans 233 to 248; it reads TSDEDFVEEAGEEDGG. Phosphoserine is present on residues Ser234, Ser249, and Ser257. Residues 280 to 346 adopt a coiled-coil conformation; it reads SKQELIKEYL…LTENELHRQQ (67 aa). Positions 283 to 311 are mediates interaction with CCNT1; it reads ELIKEYLELEKCLSRKEDENNRLRLESKR. The tract at residues 307 to 352 is required for inhibition of ESR1-dependent transcription; sequence LESKRLGGVDARVRELELELDRLRAENRQLLTENELHRQQERAPPS. The interval 337-356 is disordered; it reads LTENELHRQQERAPPSKFGD.

It belongs to the HEXIM family. Homooligomer and heterooligomer with HEXIM2; probably dimeric. Core component of the 7SK RNP complex, at least composed of 7SK RNA, LARP7, MEPCE, HEXIM1 (or HEXIM2) and P-TEFb (composed of CDK9 and CCNT1/cyclin-T1). Interacts with the N-CoR complex through NCOR1. Interacts with ESR1 and NR3C1. May interact with NF-kappa-B through RELA. Interacts with CCNT2; mediates formation of a tripartite complex with KPNA2. Part of the HDP-RNP complex composed of at least HEXIM1, PRKDC, XRCC5, XRCC6, paraspeckle proteins (SFPQ, NONO, PSPC1, RBM14, and MATR3) and NEAT1 non-coding RNA.

The protein localises to the nucleus. It is found in the cytoplasm. Transcriptional regulator which functions as a general RNA polymerase II transcription inhibitor. Core component of the 7SK RNP complex: in cooperation with 7SK snRNA sequesters P-TEFb in a large inactive 7SK snRNP complex preventing RNA polymerase II phosphorylation and subsequent transcriptional elongation. May also regulate NF-kappa-B, ESR1, NR3C1 and CIITA-dependent transcriptional activity. Plays a role in the regulation of DNA virus-mediated innate immune response by assembling into the HDP-RNP complex, a complex that serves as a platform for IRF3 phosphorylation and subsequent innate immune response activation through the cGAS-STING pathway. This is Protein HEXIM1 (Hexim1) from Rattus norvegicus (Rat).